A 104-amino-acid polypeptide reads, in one-letter code: Large ribosomal subunit protein uL23 (104 aa).

The protein belongs to the universal ribosomal protein uL23 family. Part of the 50S ribosomal subunit. Contacts protein L29, and trigger factor when it is bound to the ribosome.

One of the early assembly proteins it binds 23S rRNA. One of the proteins that surrounds the polypeptide exit tunnel on the outside of the ribosome. Forms the main docking site for trigger factor binding to the ribosome. This Cupriavidus metallidurans (strain ATCC 43123 / DSM 2839 / NBRC 102507 / CH34) (Ralstonia metallidurans) protein is Large ribosomal subunit protein uL23.